The following is a 772-amino-acid chain: DNA ligase (772 aa).

Residues 80 to 84, 130 to 131, and Glu160 each bind NAD(+); these read DAEYD and SL. The active-site N6-AMP-lysine intermediate is Lys162. Residues Arg183, Glu220, Lys336, and Lys360 each coordinate NAD(+). Cys454, Cys457, Cys473, and Cys479 together coordinate Zn(2+). The BRCT domain maps to 685-772; sequence APEQTLEGLT…NGPQGITTIG (88 aa).

This sequence belongs to the NAD-dependent DNA ligase family. LigA subfamily. The cofactor is Mg(2+). Mn(2+) is required as a cofactor.

It catalyses the reaction NAD(+) + (deoxyribonucleotide)n-3'-hydroxyl + 5'-phospho-(deoxyribonucleotide)m = (deoxyribonucleotide)n+m + AMP + beta-nicotinamide D-nucleotide.. In terms of biological role, DNA ligase that catalyzes the formation of phosphodiester linkages between 5'-phosphoryl and 3'-hydroxyl groups in double-stranded DNA using NAD as a coenzyme and as the energy source for the reaction. It is essential for DNA replication and repair of damaged DNA. The sequence is that of DNA ligase from Cutibacterium acnes (strain DSM 16379 / KPA171202) (Propionibacterium acnes).